The chain runs to 385 residues: Suppressor protein STP22 of temperature-sensitive alpha-factor receptor and arginine permease (385 aa).

The UEV domain occupies 12–161 (AVVNWLFKVI…LHEPPQDQAP (150 aa)). Positions 155-219 (PPQDQAPSLP…DMDNTDISPT (65 aa)) are disordered. Over residues 168 to 177 (NTQLQQEQNT) the composition is skewed to polar residues. Over residues 178–201 (PPLPPKPKSPHLKPPLPPPPPPQP) the composition is skewed to pro residues. A coiled-coil region spans residues 272–300 (LRAVEQAIEQTMHSLNAQIDVLTANRAKV). An SB domain is found at 322 to 385 (TDGLNQLYNL…HIQRITSPLS (64 aa)).

Belongs to the ubiquitin-conjugating enzyme family. UEV subfamily. As to quaternary structure, component of the ESCRT-I complex (endosomal sorting complex required for transport I) which consists of STP22, VPS28, SRN2 and MVB12 in a 1:1:1:1 stoichiometry. Interacts with HSE1 and VPS27. Interacts with MVB12 and SRN2.

The protein localises to the cytoplasm. The protein resides in the endosome. Its subcellular location is the late endosome membrane. Its function is as follows. Component of the ESCRT-I complex, a regulator of vesicular trafficking process. Binds to ubiquitinated cargo proteins and is required for the sorting of endocytic ubiquitinated cargos into multivesicular bodies (MVBs). Mediates the association to the ESCRT-0 complex. Required for vacuolar targeting of temperature-sensitive plasma membrane proteins STE2 and CAN1. The protein is Suppressor protein STP22 of temperature-sensitive alpha-factor receptor and arginine permease (STP22) of Saccharomyces cerevisiae (strain ATCC 204508 / S288c) (Baker's yeast).